The following is a 362-amino-acid chain: Dihydroorotate dehydrogenase (quinone) (362 aa).

Residues 62 to 66 (AGYDK) and T86 contribute to the FMN site. K66 is a binding site for substrate. 111 to 115 (NRLGF) is a binding site for substrate. 2 residues coordinate FMN: N139 and N170. N170 is a binding site for substrate. The Nucleophile role is filled by S173. Position 175 (N175) interacts with substrate. Positions 215 and 243 each coordinate FMN. 244 to 245 (NT) contacts substrate. Residues G266, G295, and 316–317 (YS) each bind FMN.

Belongs to the dihydroorotate dehydrogenase family. Type 2 subfamily. Monomer. FMN serves as cofactor.

The protein resides in the cell membrane. The enzyme catalyses (S)-dihydroorotate + a quinone = orotate + a quinol. It participates in pyrimidine metabolism; UMP biosynthesis via de novo pathway; orotate from (S)-dihydroorotate (quinone route): step 1/1. Catalyzes the conversion of dihydroorotate to orotate with quinone as electron acceptor. This Sinorhizobium medicae (strain WSM419) (Ensifer medicae) protein is Dihydroorotate dehydrogenase (quinone).